The chain runs to 354 residues: Protein-glutamate methylesterase/protein-glutamine glutaminase (354 aa).

The Response regulatory domain maps to 6 to 123 (RVLIVDDSAV…SQSLETLSAA (118 aa)). D57 carries the 4-aspartylphosphate modification. Residues 159-351 (ARTTHQLLAV…GDLLKQLQTR (193 aa)) form the CheB-type methylesterase domain. Catalysis depends on residues S171, H197, and D293.

The protein belongs to the CheB family. Phosphorylated by CheA. Phosphorylation of the N-terminal regulatory domain activates the methylesterase activity.

The protein localises to the cytoplasm. The enzyme catalyses [protein]-L-glutamate 5-O-methyl ester + H2O = L-glutamyl-[protein] + methanol + H(+). It catalyses the reaction L-glutaminyl-[protein] + H2O = L-glutamyl-[protein] + NH4(+). Involved in chemotaxis. Part of a chemotaxis signal transduction system that modulates chemotaxis in response to various stimuli. Catalyzes the demethylation of specific methylglutamate residues introduced into the chemoreceptors (methyl-accepting chemotaxis proteins or MCP) by CheR. Also mediates the irreversible deamidation of specific glutamine residues to glutamic acid. In Bdellovibrio bacteriovorus (strain ATCC 15356 / DSM 50701 / NCIMB 9529 / HD100), this protein is Protein-glutamate methylesterase/protein-glutamine glutaminase.